A 116-amino-acid polypeptide reads, in one-letter code: Iron-sulfur cluster insertion protein ErpA (116 aa).

Iron-sulfur cluster contacts are provided by cysteine 44, cysteine 108, and cysteine 110.

This sequence belongs to the HesB/IscA family. In terms of assembly, homodimer. Iron-sulfur cluster is required as a cofactor.

Functionally, required for insertion of 4Fe-4S clusters for at least IspG. The polypeptide is Iron-sulfur cluster insertion protein ErpA (Stutzerimonas stutzeri (strain A1501) (Pseudomonas stutzeri)).